The following is a 194-amino-acid chain: Thymidylate kinase (194 aa).

7 to 14 (GVDCVGKS) is an ATP binding site.

This sequence belongs to the thymidylate kinase family.

It carries out the reaction dTMP + ATP = dTDP + ADP. Its function is as follows. Phosphorylation of dTMP to form dTDP in both de novo and salvage pathways of dTTP synthesis. The sequence is that of Thymidylate kinase from Campylobacter lari (strain RM2100 / D67 / ATCC BAA-1060).